The chain runs to 318 residues: UPF0725 protein At3g44770 (318 aa).

The protein belongs to the UPF0725 (EMB2204) family.

This chain is UPF0725 protein At3g44770, found in Arabidopsis thaliana (Mouse-ear cress).